The chain runs to 250 residues: 3-deoxy-manno-octulosonate cytidylyltransferase (250 aa).

This sequence belongs to the KdsB family.

The protein localises to the cytoplasm. It catalyses the reaction 3-deoxy-alpha-D-manno-oct-2-ulosonate + CTP = CMP-3-deoxy-beta-D-manno-octulosonate + diphosphate. It participates in nucleotide-sugar biosynthesis; CMP-3-deoxy-D-manno-octulosonate biosynthesis; CMP-3-deoxy-D-manno-octulosonate from 3-deoxy-D-manno-octulosonate and CTP: step 1/1. It functions in the pathway bacterial outer membrane biogenesis; lipopolysaccharide biosynthesis. In terms of biological role, activates KDO (a required 8-carbon sugar) for incorporation into bacterial lipopolysaccharide in Gram-negative bacteria. This is 3-deoxy-manno-octulosonate cytidylyltransferase from Rhodopirellula baltica (strain DSM 10527 / NCIMB 13988 / SH1).